Reading from the N-terminus, the 779-residue chain is Serine/threonine-protein kinase SIK1 (779 aa).

A Protein kinase domain is found at Tyr-27 to Met-278. Residues Leu-33–Val-41 and Lys-56 each bind ATP. The active-site Proton acceptor is Asp-149. The residue at position 182 (Thr-182) is a Phosphothreonine; by LKB1 and GSK3-beta. Ser-186 carries the post-translational modification Phosphoserine; by autocatalysis. One can recognise a UBA domain in the interval Asp-303–Glu-343. Thr-322 bears the Phosphothreonine; by CaMK1 mark. Disordered stretches follow at residues Ser-350 to Leu-375 and Glu-449 to Arg-472. Polar residues predominate over residues Arg-363–Ser-373. A Phosphoserine; by PKA modification is found at Ser-577. The interval Lys-586–Arg-612 is RK-rich region. Residues Thr-621–Cys-641 form a disordered region. The span at Thr-628–Cys-641 shows a compositional bias: polar residues.

Belongs to the protein kinase superfamily. CAMK Ser/Thr protein kinase family. AMPK subfamily. In terms of assembly, interacts (when phosphorylated on Thr-182 and Ser-186) with YWHAZ. Interacts with ATP1A1. Requires Mg(2+) as cofactor. In terms of processing, phosphorylated at Thr-182 by STK11/LKB1 in complex with STE20-related adapter-alpha (STRADA) pseudo kinase and CAB39, leading to its activation. Phosphorylation at Thr-182 promotes autophosphorylation at Ser-186, which is required for sustained activity. Autophosphorylation at Ser-186 is maintained by sequential phosphorylation at Thr-182 by GSK3-beta. GSK3-beta cannot initiate phosphorylation at Thr-182, it can only maintain it. Phosphorylation at Ser-577 by PKA promotes translocation to the cytoplasm. Phosphorylation at Thr-322 by CaMK1 following intracellular sodium concentration leads to activation. Expressed in lung, skin, ovary, heart and stomach. No expression in brain, liver or adult skeletal muscle but is present in skeletal muscle progenitor cells of the somite beginning at 9.5 dpc. Present at 8.0 dpc in the monolayer of presumptive myocardial cells but rapidly down-regulated at 8.5 dpc upon primitive ventricle formation, although still present in myocardial cells that will populate the primitive atrium and bulbus cordis. At 9.5 dpc expression is down-regulated in the primitive atrium but observed in the sinus venosus and truncus arteriosus.

It localises to the cytoplasm. The protein localises to the nucleus. The catalysed reaction is L-seryl-[protein] + ATP = O-phospho-L-seryl-[protein] + ADP + H(+). It carries out the reaction L-threonyl-[protein] + ATP = O-phospho-L-threonyl-[protein] + ADP + H(+). With respect to regulation, activated by phosphorylation on Thr-182. Also activated by phosphorylation on Thr-322 in response to increases in intracellular sodium in parallel with elevations in intracellular calcium through the reversible sodium/calcium exchanger. Its function is as follows. Serine/threonine-protein kinase involved in various processes such as cell cycle regulation, gluconeogenesis and lipogenesis regulation, muscle growth and differentiation and tumor suppression. Phosphorylates HDAC4, HDAC5, PPME1, SREBF1, CRTC1/TORC1 and CRTC2/TORC2. Acts as a tumor suppressor and plays a key role in p53/TP53-dependent anoikis, a type of apoptosis triggered by cell detachment: required for phosphorylation of p53/TP53 in response to loss of adhesion and is able to suppress metastasis. Part of a sodium-sensing signaling network, probably by mediating phosphorylation of PPME1: following increases in intracellular sodium, SIK1 is activated by CaMK1 and phosphorylates PPME1 subunit of protein phosphatase 2A (PP2A), leading to dephosphorylation of sodium/potassium-transporting ATPase ATP1A1 and subsequent increase activity of ATP1A1. Acts as a regulator of muscle cells by phosphorylating and inhibiting class II histone deacetylases HDAC4 and HDAC5, leading to promote expression of MEF2 target genes in myocytes. Also required during cardiomyogenesis by regulating the exit of cardiomyoblasts from the cell cycle via down-regulation of CDKN1C/p57Kip2. Acts as a regulator of hepatic gluconeogenesis by phosphorylating and repressing the CREB-specific coactivators CRTC1/TORC1 and CRTC2/TORC2, leading to inhibit CREB activity. Also regulates hepatic lipogenesis by phosphorylating and inhibiting SREBF1. In concert with CRTC1/TORC1, regulates the light-induced entrainment of the circadian clock by attenuating PER1 induction; represses CREB-mediated transcription of PER1 by phosphorylating and deactivating CRTC1/TORC1. In Mus musculus (Mouse), this protein is Serine/threonine-protein kinase SIK1 (Sik1).